A 550-amino-acid polypeptide reads, in one-letter code: Probable importin subunit alpha-A (550 aa).

Over residues 1 to 30 (MSSRDKQDSRKKEFKKSLDSETARRKREEN) the composition is skewed to basic and acidic residues. Residues 1-34 (MSSRDKQDSRKKEFKKSLDSETARRKREENSIGI) are disordered. Residues 1 to 56 (MSSRDKQDSRKKEFKKSLDSETARRKREENSIGIRKNAREELMLKRRGIVQPNPST) enclose the IBB domain. 8 ARM repeats span residues 116-155 (YPPI…NIAS), 158-198 (NRQT…NIAG), 201-241 (VDSR…KIGL), 256-297 (KPQP…YLCD), 300-339 (NTKI…NIVT), 342-381 (SSQT…NITA), 385-424 (SQID…NSTN), and 428-467 (TKSI…NIIK).

The protein belongs to the importin alpha family. In terms of assembly, forms a complex with tnpo/importin subunit beta.

It localises to the cytoplasm. Its subcellular location is the nucleus envelope. Functionally, functions in nuclear protein import via a substrate-importin alpha-beta transport complex that passes though the nuclear pore complexes (NPC). Binds specifically and directly to substrates containing either a simple or bipartite NLS motif. This chain is Probable importin subunit alpha-A, found in Dictyostelium discoideum (Social amoeba).